A 701-amino-acid chain; its full sequence is Elongation factor G 2 (701 aa).

The region spanning Asn8 to Ala290 is the tr-type G domain. Residues Ala17–Thr24, Asp88–His92, and Asn142–Asp145 each bind GTP.

It belongs to the TRAFAC class translation factor GTPase superfamily. Classic translation factor GTPase family. EF-G/EF-2 subfamily.

The protein resides in the cytoplasm. Catalyzes the GTP-dependent ribosomal translocation step during translation elongation. During this step, the ribosome changes from the pre-translocational (PRE) to the post-translocational (POST) state as the newly formed A-site-bound peptidyl-tRNA and P-site-bound deacylated tRNA move to the P and E sites, respectively. Catalyzes the coordinated movement of the two tRNA molecules, the mRNA and conformational changes in the ribosome. This is Elongation factor G 2 from Pseudoalteromonas atlantica (strain T6c / ATCC BAA-1087).